A 186-amino-acid polypeptide reads, in one-letter code: ATP synthase subunit b, chloroplastic (186 aa).

The helical transmembrane segment at 27-43 (IFETNILNLAVVLGILL) threads the bilayer.

It belongs to the ATPase B chain family. In terms of assembly, F-type ATPases have 2 components, F(1) - the catalytic core - and F(0) - the membrane proton channel. F(1) has five subunits: alpha(3), beta(3), gamma(1), delta(1), epsilon(1). F(0) has four main subunits: a(1), b(1), b'(1) and c(10-14). The alpha and beta chains form an alternating ring which encloses part of the gamma chain. F(1) is attached to F(0) by a central stalk formed by the gamma and epsilon chains, while a peripheral stalk is formed by the delta, b and b' chains.

It is found in the plastid. It localises to the chloroplast thylakoid membrane. Functionally, f(1)F(0) ATP synthase produces ATP from ADP in the presence of a proton or sodium gradient. F-type ATPases consist of two structural domains, F(1) containing the extramembraneous catalytic core and F(0) containing the membrane proton channel, linked together by a central stalk and a peripheral stalk. During catalysis, ATP synthesis in the catalytic domain of F(1) is coupled via a rotary mechanism of the central stalk subunits to proton translocation. In terms of biological role, component of the F(0) channel, it forms part of the peripheral stalk, linking F(1) to F(0). The chain is ATP synthase subunit b, chloroplastic from Mesostigma viride (Green alga).